Consider the following 332-residue polypeptide: Mitoferrin-1 (332 aa).

3 Solcar repeats span residues 31–119 (ASLG…IKRS), 129–213 (NSHI…MQEH), and 220–314 (YRPE…FKYF). 6 helical membrane-spanning segments follow: residues 33–52 (LGTH…TVMY), 94–113 (GLNI…FACY), 131–150 (HIAN…AVMN), 188–207 (SYST…FITY), 222–241 (PETH…AVTT), and 289–308 (GIQA…WSVY).

This sequence belongs to the mitochondrial carrier (TC 2.A.29) family. In terms of tissue distribution, highly expressed in hematopoietic organs, Expressed in the intermediate cell mass (ICM), a tissue equivalent to the mammalian extraembryonic yolk-sac blood islands. Colocalizes with gata1.

The protein resides in the mitochondrion inner membrane. The catalysed reaction is Fe(2+)(in) = Fe(2+)(out). Mitochondrial iron transporter that specifically mediates iron uptake in developing erythroid cells, thereby playing an essential role in heme biosynthesis. The chain is Mitoferrin-1 (slc25a37) from Danio rerio (Zebrafish).